Here is a 406-residue protein sequence, read N- to C-terminus: Cysteine desulfurase (406 aa).

Lys-226 carries the N6-(pyridoxal phosphate)lysine modification. Cys-364 (cysteine persulfide intermediate) is an active-site residue.

This sequence belongs to the class-V pyridoxal-phosphate-dependent aminotransferase family. Csd subfamily. As to quaternary structure, homodimer. Interacts with SufE and the SufBCD complex composed of SufB, SufC and SufD. The interaction with SufE is required to mediate the direct transfer of the sulfur atom from the S-sulfanylcysteine. The cofactor is pyridoxal 5'-phosphate.

It is found in the cytoplasm. It carries out the reaction (sulfur carrier)-H + L-cysteine = (sulfur carrier)-SH + L-alanine. The catalysed reaction is L-selenocysteine + AH2 = hydrogenselenide + L-alanine + A + H(+). It functions in the pathway cofactor biosynthesis; iron-sulfur cluster biosynthesis. Cysteine desulfurases mobilize the sulfur from L-cysteine to yield L-alanine, an essential step in sulfur metabolism for biosynthesis of a variety of sulfur-containing biomolecules. Component of the suf operon, which is activated and required under specific conditions such as oxidative stress and iron limitation. Acts as a potent selenocysteine lyase in vitro, that mobilizes selenium from L-selenocysteine. Selenocysteine lyase activity is however unsure in vivo. The polypeptide is Cysteine desulfurase (Salmonella heidelberg (strain SL476)).